A 162-amino-acid polypeptide reads, in one-letter code: Putative 4-hydroxy-4-methyl-2-oxoglutarate aldolase (162 aa).

Substrate is bound by residues Gly-75 to Leu-78 and Arg-97. Asp-98 provides a ligand contact to a divalent metal cation.

It belongs to the class II aldolase/RraA-like family. Homotrimer. Requires a divalent metal cation as cofactor.

The catalysed reaction is 4-hydroxy-4-methyl-2-oxoglutarate = 2 pyruvate. The enzyme catalyses oxaloacetate + H(+) = pyruvate + CO2. Its function is as follows. Catalyzes the aldol cleavage of 4-hydroxy-4-methyl-2-oxoglutarate (HMG) into 2 molecules of pyruvate. Also contains a secondary oxaloacetate (OAA) decarboxylase activity due to the common pyruvate enolate transition state formed following C-C bond cleavage in the retro-aldol and decarboxylation reactions. This is Putative 4-hydroxy-4-methyl-2-oxoglutarate aldolase from Pseudomonas aeruginosa (strain LESB58).